A 214-amino-acid chain; its full sequence is Heat shock protein 26 (214 aa).

Ser2 bears the N-acetylserine mark. Thr42 is subject to Phosphothreonine. In terms of domain architecture, sHSP spans 86 to 207 (GFPRSVAVPV…KNHVKKIEVS (122 aa)). The residue at position 90 (Ser90) is a Phosphoserine. Thr163 is modified (phosphothreonine). The segment at 192-214 (KPQKDGKNHVKKIEVSSQESWGN) is disordered. Over residues 193 to 205 (PQKDGKNHVKKIE) the composition is skewed to basic and acidic residues. Ser208 and Ser211 each carry phosphoserine.

Belongs to the small heat shock protein (HSP20) family. Present in large complexes.

Functionally, not known. One of the major polypeptides produced on heat shock. The chain is Heat shock protein 26 (HSP26) from Saccharomyces cerevisiae (strain ATCC 204508 / S288c) (Baker's yeast).